We begin with the raw amino-acid sequence, 125 residues long: Period circadian protein (125 aa).

A disordered region spans residues 1–125; that stretch reads EGSGGSGSSG…VTLTESLLNK (125 aa). 3 consecutive repeat copies span residues 30–31, 33–34, and 35–36. A compositionally biased stretch (gly residues) spans 30-84; sequence GTGGTGTNTGTNTGTGTGTGTGTGTGTGTGTGTGTGTGTGTGTGTGTGKGAGAGT. Residues 30–86 are 28 X 2 AA approximate tandem repeats of G-[TA]; sequence GTGGTGTNTGTNTGTGTGTGTGTGTGTGTGTGTGTGTGTGTGTGTGTGKGAGAGTGT. The stretch at 37-38 is one 4; approximate repeat; it reads NT. Repeat 5 spans residues 39–40; the sequence is GT. A 6; approximate repeat occupies 41-42; sequence NT. 17 consecutive repeat copies span residues 43-44, 45-46, 47-48, 49-50, 51-52, 53-54, 55-56, 57-58, 59-60, 61-62, 63-64, 65-66, 67-68, 69-70, 71-72, 73-74, and 75-76. A 24; approximate repeat occupies 77-78; it reads GK. Tandem repeats lie at residues 79–80, 81–82, 83–84, and 85–86. Low complexity predominate over residues 85–112; that stretch reads GTATNETAGPGTTTTTTTRSTTTAATAA. Polar residues predominate over residues 116–125; the sequence is VTLTESLLNK.

As to quaternary structure, forms a heterodimer with timeless (TIM); the complex then translocates into the nucleus. Post-translationally, phosphorylated with a circadian rhythmicity, probably by the double-time protein (dbt). Phosphorylation could be implicated in the stability of per monomer and in the formation of heterodimer per-tim.

The protein localises to the nucleus. The protein resides in the cytoplasm. It is found in the perinuclear region. Essential for biological clock functions. Determines the period length of circadian and ultradian rhythms; an increase in PER dosage leads to shortened circadian rhythms and a decrease leads to lengthened circadian rhythms. Essential for the circadian rhythmicity of locomotor activity, eclosion behavior, and for the rhythmic component of the male courtship song that originates in the thoracic nervous system. The biological cycle depends on the rhythmic formation and nuclear localization of the TIM-PER complex. Light induces the degradation of TIM, which promotes elimination of PER. Nuclear activity of the heterodimer coordinatively regulates PER and TIM transcription through a negative feedback loop. Behaves as a negative element in circadian transcriptional loop. Does not appear to bind DNA, suggesting indirect transcriptional inhibition. This chain is Period circadian protein (per), found in Drosophila ananassae (Fruit fly).